A 550-amino-acid chain; its full sequence is O-phosphoserine--tRNA(Cys) ligase (550 aa).

Residues 1 to 32 (MRFNPQDWKEKSHTNFEGAWHDGPSVITPPGE) form a disordered region. Residues 212-214 (HMT), 257-259 (SAS), 299-300 (YY), and asparagine 342 contribute to the substrate site.

The protein belongs to the class-II aminoacyl-tRNA synthetase family. O-phosphoseryl-tRNA(Cys) synthetase subfamily. Homotetramer. Interacts with SepCysS.

The enzyme catalyses tRNA(Cys) + O-phospho-L-serine + ATP = O-phospho-L-seryl-tRNA(Cys) + AMP + diphosphate. Its function is as follows. Catalyzes the attachment of O-phosphoserine (Sep) to tRNA(Cys). In Methanoregula boonei (strain DSM 21154 / JCM 14090 / 6A8), this protein is O-phosphoserine--tRNA(Cys) ligase.